The following is a 122-amino-acid chain: Large ribosomal subunit protein bL20c (122 aa).

It belongs to the bacterial ribosomal protein bL20 family.

It is found in the plastid. The protein localises to the chloroplast. Functionally, binds directly to 23S ribosomal RNA and is necessary for the in vitro assembly process of the 50S ribosomal subunit. It is not involved in the protein synthesizing functions of that subunit. This is Large ribosomal subunit protein bL20c from Dioscorea elephantipes (Elephant's foot yam).